The chain runs to 209 residues: Ubiquitin-conjugating enzyme E2 S (209 aa).

The UBC core domain occupies Q14–Q160. The active-site Glycyl thioester intermediate is the C98. A disordered region spans residues C164–L209. The span at D171–L199 shows a compositional bias: basic and acidic residues. The span at K200–L209 shows a compositional bias: basic residues.

This sequence belongs to the ubiquitin-conjugating enzyme family.

The enzyme catalyses S-ubiquitinyl-[E1 ubiquitin-activating enzyme]-L-cysteine + [E2 ubiquitin-conjugating enzyme]-L-cysteine = [E1 ubiquitin-activating enzyme]-L-cysteine + S-ubiquitinyl-[E2 ubiquitin-conjugating enzyme]-L-cysteine.. Its pathway is protein modification; protein ubiquitination. Functionally, catalyzes the covalent attachment of ubiquitin to other proteins. Acts as an essential factor of the anaphase promoting complex/cyclosome (APC/C), a cell cycle-regulated ubiquitin ligase that controls progression through mitosis. Acts by specifically elongating polyubiquitin chains initiated by the E2 enzyme vih/UbcH10 on APC/C substrates, enhancing the degradation of APC/C substrates by the proteasome and promoting mitotic exit. The polypeptide is Ubiquitin-conjugating enzyme E2 S (Drosophila yakuba (Fruit fly)).